Consider the following 429-residue polypeptide: Enolase (429 aa).

Residue glutamine 164 participates in (2R)-2-phosphoglycerate binding. Glutamate 206 acts as the Proton donor in catalysis. Mg(2+) contacts are provided by aspartate 243, glutamate 286, and aspartate 313. The (2R)-2-phosphoglycerate site is built by lysine 338, arginine 367, serine 368, and lysine 389. Residue lysine 338 is the Proton acceptor of the active site.

This sequence belongs to the enolase family. Homooctamer. Forms a ring-shaped particle. Mg(2+) serves as cofactor.

The protein localises to the cytoplasm. It localises to the secreted. The protein resides in the cell surface. It carries out the reaction (2R)-2-phosphoglycerate = phosphoenolpyruvate + H2O. It participates in carbohydrate degradation; glycolysis; pyruvate from D-glyceraldehyde 3-phosphate: step 4/5. Inhibited by fluoride and phosphate. In terms of biological role, catalyzes the reversible conversion of 2-phosphoglycerate (2-PG) into phosphoenolpyruvate (PEP). It is essential for the degradation of carbohydrates via glycolysis. The chain is Enolase from Thermotoga maritima (strain ATCC 43589 / DSM 3109 / JCM 10099 / NBRC 100826 / MSB8).